A 177-amino-acid polypeptide reads, in one-letter code: Probable inosine/xanthosine triphosphatase (177 aa).

This sequence belongs to the YjjX NTPase family. Homodimer. It depends on Mg(2+) as a cofactor. The cofactor is Mn(2+).

It catalyses the reaction XTP + H2O = XDP + phosphate + H(+). It carries out the reaction ITP + H2O = IDP + phosphate + H(+). Phosphatase that hydrolyzes non-canonical purine nucleotides such as XTP and ITP to their respective diphosphate derivatives. Probably excludes non-canonical purines from DNA/RNA precursor pool, thus preventing their incorporation into DNA/RNA and avoiding chromosomal lesions. The protein is Probable inosine/xanthosine triphosphatase of Pyrobaculum islandicum (strain DSM 4184 / JCM 9189 / GEO3).